The sequence spans 404 residues: Probable tRNA sulfurtransferase (404 aa).

The THUMP domain maps to 60–165 (QPVAESLKQI…EEAAYISYET (106 aa)). Residues 183 to 184 (ML), 208 to 209 (HF), Arg-265, Gly-287, and Gln-296 each bind ATP.

The protein belongs to the ThiI family.

It localises to the cytoplasm. The enzyme catalyses [ThiI sulfur-carrier protein]-S-sulfanyl-L-cysteine + a uridine in tRNA + 2 reduced [2Fe-2S]-[ferredoxin] + ATP + H(+) = [ThiI sulfur-carrier protein]-L-cysteine + a 4-thiouridine in tRNA + 2 oxidized [2Fe-2S]-[ferredoxin] + AMP + diphosphate. It catalyses the reaction [ThiS sulfur-carrier protein]-C-terminal Gly-Gly-AMP + S-sulfanyl-L-cysteinyl-[cysteine desulfurase] + AH2 = [ThiS sulfur-carrier protein]-C-terminal-Gly-aminoethanethioate + L-cysteinyl-[cysteine desulfurase] + A + AMP + 2 H(+). The protein operates within cofactor biosynthesis; thiamine diphosphate biosynthesis. Functionally, catalyzes the ATP-dependent transfer of a sulfur to tRNA to produce 4-thiouridine in position 8 of tRNAs, which functions as a near-UV photosensor. Also catalyzes the transfer of sulfur to the sulfur carrier protein ThiS, forming ThiS-thiocarboxylate. This is a step in the synthesis of thiazole, in the thiamine biosynthesis pathway. The sulfur is donated as persulfide by IscS. The sequence is that of Probable tRNA sulfurtransferase from Streptococcus sanguinis (strain SK36).